The sequence spans 717 residues: MSQEKQVFSIDLAGRQLTIETSQLAKQANGAVLVRYGDTAVLSTATASKEPKNVDFFPLTVNYEERLYAVGKIPGGFIKREGRPSEKAILASRLIDRPIRPLFADGFRNEVQVVSIVMSVDQDCSSEMAAMLGSSLALSISDIPFEGPIAGATVGRINGEFVINPTVEQQEQSDMHLVVAGTKDAINMVEAGADQVPEETMLEAIMFGHDEIKRLIAFQEEIVQAVGKEKTAVKLYEVDADLNQAVREMAETDMHSAIQVHEKHAREDAISVVKKRVIEHYEAEEADADTLGQVSEILYKIVKEEVRRLITVEKIRPDGRKGDEIRPLASEVGILSRTHGSGLFTRGQTQALSICTLGALGDVQILDGLGVEESKRFMHHYNFPSFSVGETRPMRGPGRREIGHGALGERALEPVLPSEKDFPYTVRLVSEVLESNGSTSQASICGSTLAMMDAGVPLKAPVAGIAMGLVKSGEHYTILTDIQGMEDHLGDMDFKVAGTAKGVTALQMDIKIDGLSREILEEALQQAKVGRMHILNHMLSVIAEPRIELSAYAPKIITMAINPDKIRDVIGPSGKQINKIIEETGVKIDIEQDGTVFISSINQEMNEKAKKIIEDIVREVQVGEIYLGKVKRVEKFGAFVELFSGKDGLVHISELALERVGKVEDVVKIGDEISVKVIEIDKQGRVNLSRKVLLKEEQEKEAAKEEAAKEENAQEQQ.

Mg(2+)-binding residues include aspartate 487 and aspartate 493. In terms of domain architecture, KH spans proline 554 to isoleucine 613. The 69-residue stretch at glycine 623–lysine 691 folds into the S1 motif domain.

It belongs to the polyribonucleotide nucleotidyltransferase family. It depends on Mg(2+) as a cofactor.

The protein localises to the cytoplasm. It carries out the reaction RNA(n+1) + phosphate = RNA(n) + a ribonucleoside 5'-diphosphate. In terms of biological role, involved in mRNA degradation. Catalyzes the phosphorolysis of single-stranded polyribonucleotides processively in the 3'- to 5'-direction. The sequence is that of Polyribonucleotide nucleotidyltransferase from Bacillus mycoides (strain KBAB4) (Bacillus weihenstephanensis).